The chain runs to 203 residues: GTP cyclohydrolase-2 (203 aa).

Residue 49–53 participates in GTP binding; that stretch reads RIHSE. 3 residues coordinate Zn(2+): cysteine 54, cysteine 65, and cysteine 67. Residues glutamine 70, 92 to 94, and threonine 114 each bind GTP; that span reads EGR. Aspartate 126 serves as the catalytic Proton acceptor. Arginine 128 serves as the catalytic Nucleophile. 2 residues coordinate GTP: threonine 149 and lysine 154.

The protein belongs to the GTP cyclohydrolase II family. Zn(2+) serves as cofactor.

The enzyme catalyses GTP + 4 H2O = 2,5-diamino-6-hydroxy-4-(5-phosphoribosylamino)-pyrimidine + formate + 2 phosphate + 3 H(+). It functions in the pathway cofactor biosynthesis; riboflavin biosynthesis; 5-amino-6-(D-ribitylamino)uracil from GTP: step 1/4. Its function is as follows. Catalyzes the conversion of GTP to 2,5-diamino-6-ribosylamino-4(3H)-pyrimidinone 5'-phosphate (DARP), formate and pyrophosphate. The sequence is that of GTP cyclohydrolase-2 from Shewanella sp. (strain MR-4).